Consider the following 688-residue polypeptide: Glycine--tRNA ligase beta subunit (688 aa).

It belongs to the class-II aminoacyl-tRNA synthetase family. As to quaternary structure, tetramer of two alpha and two beta subunits.

The protein localises to the cytoplasm. It carries out the reaction tRNA(Gly) + glycine + ATP = glycyl-tRNA(Gly) + AMP + diphosphate. This Shewanella sp. (strain MR-7) protein is Glycine--tRNA ligase beta subunit.